Consider the following 138-residue polypeptide: Lactoylglutathione lyase (138 aa).

Residues 2-126 enclose the VOC domain; sequence RLLHTMLRVG…DGYKIEFIQK (125 aa). Histidine 5 provides a ligand contact to Ni(2+). Position 9 (arginine 9) interacts with substrate. Glutamate 56 provides a ligand contact to Ni(2+). Residues asparagine 60 and histidine 74 each coordinate substrate. Residues histidine 74 and glutamate 122 each coordinate Ni(2+). The Proton donor/acceptor role is filled by glutamate 122.

This sequence belongs to the glyoxalase I family. The cofactor is Ni(2+).

It catalyses the reaction (R)-S-lactoylglutathione = methylglyoxal + glutathione. It functions in the pathway secondary metabolite metabolism; methylglyoxal degradation; (R)-lactate from methylglyoxal: step 1/2. Its function is as follows. Catalyzes the conversion of hemimercaptal, formed from methylglyoxal and glutathione, to S-lactoylglutathione. In Neisseria meningitidis serogroup A / serotype 4A (strain DSM 15465 / Z2491), this protein is Lactoylglutathione lyase (gloA).